Consider the following 132-residue polypeptide: MHQAGHYSWPSPAVNSSSEQEPQRQLPEVLSGTWEQPRVDGLPVVTVIVAVFVLLAVCIIVAVHFGPRLHQGHATLPTEPPTPKPDGGIYLIHWRVLGPQDSPEEAPPGPLVPGSCPAPDGPRPSIDEVTCL.

The tract at residues 1 to 28 is disordered; sequence MHQAGHYSWPSPAVNSSSEQEPQRQLPE. A glycan (N-linked (GlcNAc...) asparagine) is linked at Asn-15. Residues 43–63 traverse the membrane as a helical segment; it reads PVVTVIVAVFVLLAVCIIVAV. The segment at 99 to 132 is disordered; the sequence is PQDSPEEAPPGPLVPGSCPAPDGPRPSIDEVTCL.

The protein resides in the membrane. This chain is Small integral membrane protein 33, found in Homo sapiens (Human).